Reading from the N-terminus, the 430-residue chain is Serine--tRNA ligase (430 aa).

231–233 (TSE) contacts L-serine. 262-264 (RSE) provides a ligand contact to ATP. An L-serine-binding site is contributed by Glu-285. Residue 349 to 352 (EISS) participates in ATP binding. Ser-385 serves as a coordination point for L-serine.

Belongs to the class-II aminoacyl-tRNA synthetase family. Type-1 seryl-tRNA synthetase subfamily. In terms of assembly, homodimer. The tRNA molecule binds across the dimer.

It is found in the cytoplasm. The enzyme catalyses tRNA(Ser) + L-serine + ATP = L-seryl-tRNA(Ser) + AMP + diphosphate + H(+). It carries out the reaction tRNA(Sec) + L-serine + ATP = L-seryl-tRNA(Sec) + AMP + diphosphate + H(+). Its pathway is aminoacyl-tRNA biosynthesis; selenocysteinyl-tRNA(Sec) biosynthesis; L-seryl-tRNA(Sec) from L-serine and tRNA(Sec): step 1/1. Catalyzes the attachment of serine to tRNA(Ser). Is also able to aminoacylate tRNA(Sec) with serine, to form the misacylated tRNA L-seryl-tRNA(Sec), which will be further converted into selenocysteinyl-tRNA(Sec). The protein is Serine--tRNA ligase of Roseobacter denitrificans (strain ATCC 33942 / OCh 114) (Erythrobacter sp. (strain OCh 114)).